The chain runs to 345 residues: Variable large protein 23 (345 aa).

Residues 1-18 (MRKRISAIIMTLFMVLVS) form the signal peptide. Cys19 carries the N-palmitoyl cysteine lipid modification. Cys19 is lipidated: S-diacylglycerol cysteine.

It belongs to the variable large protein (Vlp) family. Delta subfamily.

Its subcellular location is the cell outer membrane. Its function is as follows. The Vlp and Vsp proteins are antigenically distinct proteins, only one vlp or vsp gene is transcriptionally active at any one time. Switching between these genes is a mechanism of host immune response evasion. The polypeptide is Variable large protein 23 (Borrelia hermsii).